A 365-amino-acid polypeptide reads, in one-letter code: N-acetylgalactosamine-N,N'-diacetylbacillosaminyl-diphospho-undecaprenol 4-alpha-N-acetylgalactosaminyltransferase (365 aa).

The protein belongs to the glycosyltransferase group 1 family.

It localises to the cell inner membrane. It catalyses the reaction N-acetyl-alpha-D-galactosaminyl-(1-&gt;3)-N,N'-diacetyl-alpha-D-bacillosaminyl-tri-trans,hepta-cis-undecaprenyl diphosphate + UDP-N-acetyl-alpha-D-galactosamine = N-acetyl-alpha-D-galactosaminyl-(1-&gt;4)-N-acetyl-alpha-D-galactosaminyl-(1-&gt;3)-N,N'-diacetyl-alpha-D-bacillosaminyl-tri-trans,heptacis-undecaprenyl diphosphate + UDP + H(+). It participates in protein modification; protein glycosylation. Functionally, adds a GalNAc residue on to the Und-PP-Bac2,4diNAc-GalNAc disaccharide in the N-linked protein glycosylation pathway. Transfers the third sugar in the heptasaccharide biosynthesis. This is N-acetylgalactosamine-N,N'-diacetylbacillosaminyl-diphospho-undecaprenol 4-alpha-N-acetylgalactosaminyltransferase (pglJ) from Campylobacter jejuni subsp. jejuni serotype O:2 (strain ATCC 700819 / NCTC 11168).